A 53-amino-acid polypeptide reads, in one-letter code: Large ribosomal subunit protein bL33A (53 aa).

It belongs to the bacterial ribosomal protein bL33 family.

The chain is Large ribosomal subunit protein bL33A (rpmG1) from Mycoplasma genitalium (strain ATCC 33530 / DSM 19775 / NCTC 10195 / G37) (Mycoplasmoides genitalium).